Consider the following 118-residue polypeptide: Fluoride-specific ion channel FluC 1 (118 aa).

The next 4 membrane-spanning stretches (helical) occupy residues 5-25 (FVLVGFGAALGAMLRYGISVL), 34-54 (FPFATFFINITGSFLLGFLVS), 56-76 (ALGPVWQLFLGTGFMGGYTTF), and 98-118 (YLGCTYVFGLIAAFLGLMLGV). Gly-71 and Thr-74 together coordinate Na(+).

It belongs to the fluoride channel Fluc/FEX (TC 1.A.43) family.

The protein localises to the cell membrane. It carries out the reaction fluoride(in) = fluoride(out). Na(+) is not transported, but it plays an essential structural role and its presence is essential for fluoride channel function. Functionally, fluoride-specific ion channel. Important for reducing fluoride concentration in the cell, thus reducing its toxicity. This Listeria monocytogenes serotype 4b (strain F2365) protein is Fluoride-specific ion channel FluC 1.